The following is a 146-amino-acid chain: uncharacterized protein (146 aa).

The next 5 helical transmembrane spans lie at 5-27 (GAMVLLTMLILYAAPSFALYGLA), 32-49 (FVYVGAIMIVAFGVYIIL), 61-80 (LAVMLISALTAIFLAYFFSG), 90-108 (SLGLFAVVAAMLLALARVF), and 120-142 (FFLKWILVVAITFTILSVFMLFL).

It localises to the cell membrane. This is an uncharacterized protein from Archaeoglobus fulgidus (strain ATCC 49558 / DSM 4304 / JCM 9628 / NBRC 100126 / VC-16).